A 294-amino-acid chain; its full sequence is 4-hydroxy-tetrahydrodipicolinate synthase (294 aa).

A pyruvate-binding site is contributed by Thr-45. Tyr-133 serves as the catalytic Proton donor/acceptor. The active-site Schiff-base intermediate with substrate is the Lys-161. Ile-203 is a pyruvate binding site.

The protein belongs to the DapA family. As to quaternary structure, homotetramer; dimer of dimers.

The protein localises to the cytoplasm. It catalyses the reaction L-aspartate 4-semialdehyde + pyruvate = (2S,4S)-4-hydroxy-2,3,4,5-tetrahydrodipicolinate + H2O + H(+). The protein operates within amino-acid biosynthesis; L-lysine biosynthesis via DAP pathway; (S)-tetrahydrodipicolinate from L-aspartate: step 3/4. In terms of biological role, catalyzes the condensation of (S)-aspartate-beta-semialdehyde [(S)-ASA] and pyruvate to 4-hydroxy-tetrahydrodipicolinate (HTPA). The chain is 4-hydroxy-tetrahydrodipicolinate synthase from Buchnera aphidicola subsp. Acyrthosiphon pisum (strain APS) (Acyrthosiphon pisum symbiotic bacterium).